Reading from the N-terminus, the 416-residue chain is Squamosa promoter-binding-like protein 8 (416 aa).

Residues 11–51 (SSCDDFGYNATPPPPPSLLPIMDQDGGGGSIQRDHHQHHNH) form a disordered region. An SBP-type zinc finger spans residues 182–260 (PPRCQAEGCK…ADHNRRRRKS (79 aa)). Zn(2+) is bound by residues C185, C190, C207, H210, C227, C230, H234, and C246. The Bipartite nuclear localization signal signature appears at 243-259 (KKSCRKRLADHNRRRRK). The segment at 250 to 299 (LADHNRRRRKSKPSDGEHSGEKRRAQANKSAATKDKAGSSSKNAGIGDGF) is disordered. A compositionally biased stretch (basic and acidic residues) spans 261-273 (KPSDGEHSGEKRR).

In terms of tissue distribution, expressed in stems, leaf sheaths, and young panicles. Weakly expressed in ligules, auricles, and leaf sheaths at the basal region.

Its subcellular location is the nucleus. Its function is as follows. Probable transcription factor that plays an important role in building the laminar joint between leaf blade and leaf sheath boundary, thereby controlling ligule and auricle development. The chain is Squamosa promoter-binding-like protein 8 (SPL8) from Oryza sativa subsp. japonica (Rice).